Here is a 596-residue protein sequence, read N- to C-terminus: Chaperone protein DnaK (596 aa).

At Thr180 the chain carries Phosphothreonine; by autocatalysis.

The protein belongs to the heat shock protein 70 family.

In terms of biological role, acts as a chaperone. The protein is Chaperone protein DnaK of Thermotoga neapolitana (strain ATCC 49049 / DSM 4359 / NBRC 107923 / NS-E).